Reading from the N-terminus, the 572-residue chain is Galectin-3-binding protein B (572 aa).

The N-terminal stretch at 1–14 (MLLLWPLLFLQVSA) is a signal peptide. In terms of domain architecture, SRCR spans 32-131 (VRLVGVIPSS…HKEDAGVICA (100 aa)). Cystine bridges form between Cys-56–Cys-120, Cys-69–Cys-130, and Cys-100–Cys-110. Asn-135, Asn-195, and Asn-202 each carry an N-linked (GlcNAc...) asparagine glycan. Positions 164-231 (CDFTIAVRDL…LYTRQIDVST (68 aa)) constitute a BTB domain. Positions 270–372 (QVSMYEYGVR…IPVDKLYDIQ (103 aa)) constitute a BACK domain. N-linked (GlcNAc...) asparagine glycosylation is found at Asn-430 and Asn-548.

It localises to the secreted. It is found in the extracellular space. Its subcellular location is the extracellular matrix. Functionally, promotes integrin-mediated cell adhesion. This is Galectin-3-binding protein B (lgals3bpb) from Danio rerio (Zebrafish).